The primary structure comprises 350 residues: Probable choline kinase 2 (350 aa).

3 residues coordinate ATP: arginine 73, glutamine 210, and aspartate 227.

Belongs to the choline/ethanolamine kinase family.

The enzyme catalyses choline + ATP = phosphocholine + ADP + H(+). The protein operates within phospholipid metabolism; phosphatidylcholine biosynthesis; phosphocholine from choline: step 1/1. Its function is as follows. Involved in phospholipid biosynthesis. Catalyzes the first step in phosphatidylcholine biosynthesis. This is Probable choline kinase 2 from Arabidopsis thaliana (Mouse-ear cress).